The following is a 523-amino-acid chain: NAD(P)H-quinone oxidoreductase subunit 2 (523 aa).

14 consecutive transmembrane segments (helical) span residues 29–49 (AIAPEGAVLVAMLATLLVDLA), 57–77 (WVPPICYAGLGTALVLLAQQW), 94–114 (LAIAFRAVVALSTLLSLLISW), 123–143 (PIGEYAAILLAATLGAMLLCG), 147–167 (LVSVFVSLETLSVASYLLAGY), 182–202 (LLVGSAAAAVFLYGASLLYGL), 221–243 (PLAALSLVFVLATVAFKIAAVPF), 255–275 (PTPVVAFLSVGSKAAGFALAL), 291–311 (LLFTVLAVLSMTLGNVVALAQ), 317–337 (MLAYSSIGQAGFVMIGLVCGT), 345–365 (VLYMAAYLFMNLGAFACIILF), 389–409 (LGLSLCLLSLGGIPPMLGFFG), 424–444 (LLVVVGLVTSVVSIYYYISVI), and 477–497 (IALVGCVVVTAVGGILSNPLF).

Belongs to the complex I subunit 2 family. As to quaternary structure, NDH-1 can be composed of about 15 different subunits; different subcomplexes with different compositions have been identified which probably have different functions.

It is found in the cellular thylakoid membrane. It catalyses the reaction a plastoquinone + NADH + (n+1) H(+)(in) = a plastoquinol + NAD(+) + n H(+)(out). The enzyme catalyses a plastoquinone + NADPH + (n+1) H(+)(in) = a plastoquinol + NADP(+) + n H(+)(out). In terms of biological role, NDH-1 shuttles electrons from an unknown electron donor, via FMN and iron-sulfur (Fe-S) centers, to quinones in the respiratory and/or the photosynthetic chain. The immediate electron acceptor for the enzyme in this species is believed to be plastoquinone. Couples the redox reaction to proton translocation, and thus conserves the redox energy in a proton gradient. Cyanobacterial NDH-1 also plays a role in inorganic carbon-concentration. The polypeptide is NAD(P)H-quinone oxidoreductase subunit 2 (Prochlorococcus marinus (strain MIT 9303)).